An 882-amino-acid chain; its full sequence is Valine--tRNA ligase (882 aa).

A 'HIGH' region motif is present at residues 48–58 (PNVTGKLHLGH). The short motif at 524–528 (KMSKS) is the 'KMSKS' region element. An ATP-binding site is contributed by K527. Residues 809–882 (LAELLDLDEE…KRLAELKAAR (74 aa)) adopt a coiled-coil conformation. The disordered stretch occupies residues 844–866 (GFTDRAPEKVVQEERDKQADYEQ). Residues 845-863 (FTDRAPEKVVQEERDKQAD) are compositionally biased toward basic and acidic residues.

Belongs to the class-I aminoacyl-tRNA synthetase family. ValS type 1 subfamily. As to quaternary structure, monomer.

The protein localises to the cytoplasm. It catalyses the reaction tRNA(Val) + L-valine + ATP = L-valyl-tRNA(Val) + AMP + diphosphate. Catalyzes the attachment of valine to tRNA(Val). As ValRS can inadvertently accommodate and process structurally similar amino acids such as threonine, to avoid such errors, it has a 'posttransfer' editing activity that hydrolyzes mischarged Thr-tRNA(Val) in a tRNA-dependent manner. This Latilactobacillus sakei subsp. sakei (strain 23K) (Lactobacillus sakei subsp. sakei) protein is Valine--tRNA ligase.